Reading from the N-terminus, the 659-residue chain is DNA ligase (659 aa).

NAD(+) is bound by residues 32-36 (DAEYD), 81-82 (SL), and Glu110. Lys112 (N6-AMP-lysine intermediate) is an active-site residue. The NAD(+) site is built by Arg133, Glu168, Lys284, and Lys308. 4 residues coordinate Zn(2+): Cys402, Cys405, Cys420, and Cys425. The 78-residue stretch at 582 to 659 (AKPQIFAGKS…SEEEFAELLP (78 aa)) folds into the BRCT domain.

The protein belongs to the NAD-dependent DNA ligase family. LigA subfamily. Mg(2+) is required as a cofactor. It depends on Mn(2+) as a cofactor.

It catalyses the reaction NAD(+) + (deoxyribonucleotide)n-3'-hydroxyl + 5'-phospho-(deoxyribonucleotide)m = (deoxyribonucleotide)n+m + AMP + beta-nicotinamide D-nucleotide.. DNA ligase that catalyzes the formation of phosphodiester linkages between 5'-phosphoryl and 3'-hydroxyl groups in double-stranded DNA using NAD as a coenzyme and as the energy source for the reaction. It is essential for DNA replication and repair of damaged DNA. This chain is DNA ligase, found in Desulfitobacterium hafniense (strain Y51).